A 751-amino-acid polypeptide reads, in one-letter code: Photosystem I P700 chlorophyll a apoprotein A1 (751 aa).

8 consecutive transmembrane segments (helical) span residues 73 to 96, 159 to 182, 198 to 222, 294 to 312, 349 to 372, 388 to 414, 436 to 458, and 533 to 551; these read VFSA…FHGA, LYST…FHFH, LNHH…HVSL, TAHH…GHMY, WHAQ…HHQY, LSLF…IFMI, AIIS…LYIH, and FLVH…LILL. [4Fe-4S] cluster-binding residues include Cys575 and Cys584. 2 consecutive transmembrane segments (helical) span residues 591 to 612 and 665 to 687; these read HVFL…HFSW and LSAY…MFLF. Chlorophyll a' is bound at residue His676. Chlorophyll a contacts are provided by Met684 and Tyr692. Position 693 (Trp693) interacts with phylloquinone. Residues 725–745 traverse the membrane as a helical segment; it reads AVGVAHYLLGGIATTWSFFLA.

The protein belongs to the PsaA/PsaB family. The PsaA/B heterodimer binds the P700 chlorophyll special pair and subsequent electron acceptors. PSI consists of a core antenna complex that captures photons, and an electron transfer chain that converts photonic excitation into a charge separation. The eukaryotic PSI reaction center is composed of at least 11 subunits. P700 is a chlorophyll a/chlorophyll a' dimer, A0 is one or more chlorophyll a, A1 is one or both phylloquinones and FX is a shared 4Fe-4S iron-sulfur center. is required as a cofactor.

It localises to the plastid. It is found in the chloroplast thylakoid membrane. The catalysed reaction is reduced [plastocyanin] + hnu + oxidized [2Fe-2S]-[ferredoxin] = oxidized [plastocyanin] + reduced [2Fe-2S]-[ferredoxin]. Functionally, psaA and PsaB bind P700, the primary electron donor of photosystem I (PSI), as well as the electron acceptors A0, A1 and FX. PSI is a plastocyanin/cytochrome c6-ferredoxin oxidoreductase, converting photonic excitation into a charge separation, which transfers an electron from the donor P700 chlorophyll pair to the spectroscopically characterized acceptors A0, A1, FX, FA and FB in turn. Oxidized P700 is reduced on the lumenal side of the thylakoid membrane by plastocyanin or cytochrome c6. The chain is Photosystem I P700 chlorophyll a apoprotein A1 from Tupiella akineta (Green alga).